A 947-amino-acid chain; its full sequence is Bromodomain testis-specific protein (947 aa).

Residues Arg-27–Met-133 enclose the Bromo 1 domain. Ser-187 is modified (phosphoserine). Residues Lys-209–Pro-220 carry the Nuclear localization signal motif. The Bromo 2 domain occupies Val-267–Ile-376. Disordered stretches follow at residues Glu-395–Gln-421, Pro-444–Tyr-512, Asn-610–Met-690, and His-849–Val-873. Low complexity predominate over residues Asn-403–Gly-413. Residues Asp-417 to Asn-470 are a coiled coil. Positions Lys-447 to Glu-462 are enriched in basic residues. Residues Asn-470 to Lys-481 show a composition bias toward basic and acidic residues. The span at Glu-482–Gln-494 shows a compositional bias: basic residues. An NET domain is found at Lys-500–Pro-582. The span at Val-631–Glu-668 shows a compositional bias: low complexity. 2 stretches are compositionally biased toward basic and acidic residues: residues Thr-674–Met-690 and His-849–Arg-865.

It belongs to the BET family. Interacts with SMARCE1. Interacts with mRNA splicing machinery proteins SRSF2, DDX5, HNRNPK and TARDBP. Interacts with the acetylated N-terminus of histone H1, H2, H3 and H4. Interacts with P-TEFb components CDK9 and CCNT1/cyclin-T1. In terms of processing, ubiquitinated in a SPOP-dependent manner, leading to proteasomal degradation.

The protein resides in the nucleus. Functionally, testis-specific chromatin protein that specifically binds histone H4 acetylated at 'Lys-5' and 'Lys-8' (H4K5ac and H4K8ac, respectively) and plays a key role in spermatogenesis. Required in late pachytene spermatocytes: plays a role in meiotic and post-meiotic cells by binding to acetylated histones at the promoter of specific meiotic and post-meiotic genes, facilitating their activation at the appropriate time. In the post-meiotic phase of spermatogenesis, binds to hyperacetylated histones and participates in their general removal from DNA. Also recognizes and binds a subset of butyrylated histones: able to bind histone H4 butyrylated at 'Lys-8' (H4K8ac), while it is not able to bind H4 butyrylated at 'Lys-5' (H4K5ac). Also acts as a component of the splicing machinery in pachytene spermatocytes and round spermatids and participates in 3'-UTR truncation of specific mRNAs in post-meiotic spermatids. Required for chromocenter organization, a structure comprised of peri-centromeric heterochromatin. In Macaca fascicularis (Crab-eating macaque), this protein is Bromodomain testis-specific protein (BRDT).